Here is a 592-residue protein sequence, read N- to C-terminus: Transducer of Cdc42-dependent actin assembly protein 1 homolog (592 aa).

An F-BAR domain is found at 3 to 267 (DSCSWDQLWD…DIGLIDPSRD (265 aa)). Disordered stretches follow at residues 343-366 (FGGGTADKKTDSGDYGTLPPQQRA) and 447-519 (SATS…DELY). The region spanning 359–436 (TLPPQQRARK…IQKFKILLDD (78 aa)) is the REM-1 domain. Residues 363 to 441 (QQRARKIAGK…ILLDDVNAQL (79 aa)) are a coiled coil. Polar residues predominate over residues 447 to 457 (SATSVGGSDTP). Residues 459-474 (SIRSVSSASSGVTSRV) show a composition bias toward low complexity. Residues 495–510 (FSGSNGGSDTDPTING) show a composition bias toward polar residues. Positions 527–589 (PVLGEAIAQF…PSSYLKVTWF (63 aa)) constitute an SH3 domain.

This sequence belongs to the FNBP1 family. In terms of assembly, interacts (via SH3 domain) with wsp-1. Interacts with cdc-42 and (via SH3 domain) with wve-1. As to expression, expressed in the germline and specifically in the gonads.

The protein localises to the cell junction. The protein resides in the apical cell membrane. Its subcellular location is the basolateral cell membrane. It is found in the cytoplasmic vesicle. It localises to the cytoplasm. The protein localises to the perinuclear region. The protein resides in the recycling endosome. Plays a role in protein trafficking, actin organization and embryonic morphogenesis. Potentially acts as a cdc-42 effector. May play a role in hypodermal P-cell nuclear positioning. Together with toca-2, is required for protein trafficking regulating yolk protein clathrin-mediated endocytosis by oocytes during oogenesis and retrograde recycling and the sorting of recycling endosome cargo proteins such as mig-14. Also, together with toca-2, controls the distribution of actin at cell junctions. The polypeptide is Transducer of Cdc42-dependent actin assembly protein 1 homolog (Caenorhabditis elegans).